A 440-amino-acid polypeptide reads, in one-letter code: Xaa-Pro dipeptidase (440 aa).

Mn(2+) is bound by residues D241, D252, H333, E378, and E417.

It belongs to the peptidase M24B family. Bacterial-type prolidase subfamily. Mn(2+) is required as a cofactor.

The enzyme catalyses Xaa-L-Pro dipeptide + H2O = an L-alpha-amino acid + L-proline. Functionally, splits dipeptides with a prolyl residue in the C-terminal position. The protein is Xaa-Pro dipeptidase of Glaesserella parasuis serovar 5 (strain SH0165) (Haemophilus parasuis).